The following is a 465-amino-acid chain: MEGEIIAVNGPVIDIYFPDDVPNVYEALELENPVKNEKLVLETRILLGDHRVRAIALGSTDGISRGLKVKRTFHPISVPVSEEVLGRVVNVFGEPIDGGDKIKGEMTPIIKNAVEFRRVEPSYSILETGIKAIDLLTPFPQGGKIGLFGGAGVGKTVLIMELIHNVAVAHGGISVFAGIGERSREGNELWLEMKESGVLSKAVLVFGQMNEPPGVRMRVPLTALTIAEYFRDYLGKDVLLLMDNIFRYVQAGMEVSSMLGRIPSAVGYQPTLITELGEVEERILSTDTGSITAVQAVYVPADDLTDPAPATIFSHLDSTLVLSRSIAEMGIYPAVDPLASSSQILEPKFVGYEHAEVARKVVEILQHYESLKDIISILGVEELSEEDRVIVNRARKIQLFLSQPLFVAAAYTNIPGVYVPREKTIEGFKAIIEGEVDDLPEDAFYMVGTLEDVKKKAQEHGALMY.

149–156 (GGAGVGKT) contributes to the ATP binding site.

Belongs to the ATPase alpha/beta chains family. As to quaternary structure, F-type ATPases have 2 components, CF(1) - the catalytic core - and CF(0) - the membrane proton channel. CF(1) has five subunits: alpha(3), beta(3), gamma(1), delta(1), epsilon(1). CF(0) has three main subunits: a(1), b(2) and c(9-12). The alpha and beta chains form an alternating ring which encloses part of the gamma chain. CF(1) is attached to CF(0) by a central stalk formed by the gamma and epsilon chains, while a peripheral stalk is formed by the delta and b chains.

The protein localises to the cell inner membrane. It carries out the reaction ATP + H2O + 4 H(+)(in) = ADP + phosphate + 5 H(+)(out). Functionally, produces ATP from ADP in the presence of a proton gradient across the membrane. The catalytic sites are hosted primarily by the beta subunits. The chain is ATP synthase subunit beta from Dictyoglomus turgidum (strain DSM 6724 / Z-1310).